Here is a 148-residue protein sequence, read N- to C-terminus: Protein NrdI (148 aa).

Belongs to the NrdI family.

Functionally, probably involved in ribonucleotide reductase function. The chain is Protein NrdI from Mycolicibacterium gilvum (strain PYR-GCK) (Mycobacterium gilvum (strain PYR-GCK)).